We begin with the raw amino-acid sequence, 390 residues long: GTPase Obg (390 aa).

The 159-residue stretch at 1–159 folds into the Obg domain; that stretch reads MKFVDEASIL…RELLLELMLL (159 aa). The segment at 127–147 is disordered; the sequence is NTRFKSSVNRTPRQKTNGTPG. Over residues 129-145 the composition is skewed to polar residues; that stretch reads RFKSSVNRTPRQKTNGT. Positions 160 to 333 constitute an OBG-type G domain; that stretch reads ADVGMLGMPN…LCWDVMTFIL (174 aa). Residues 166-173, 191-195, 213-216, 283-286, and 314-316 contribute to the GTP site; these read GMPNAGKS, FTTLV, DIPG, NKID, and SAA. Residues serine 173 and threonine 193 each contribute to the Mg(2+) site.

Belongs to the TRAFAC class OBG-HflX-like GTPase superfamily. OBG GTPase family. As to quaternary structure, monomer. It depends on Mg(2+) as a cofactor.

The protein localises to the cytoplasm. An essential GTPase which binds GTP, GDP and possibly (p)ppGpp with moderate affinity, with high nucleotide exchange rates and a fairly low GTP hydrolysis rate. Plays a role in control of the cell cycle, stress response, ribosome biogenesis and in those bacteria that undergo differentiation, in morphogenesis control. The polypeptide is GTPase Obg (Shigella sonnei (strain Ss046)).